A 238-amino-acid chain; its full sequence is ATP synthase subunit a (238 aa).

The next 5 membrane-spanning stretches (helical) occupy residues 17-37, 75-95, 112-132, 179-199, and 202-222; these read LSDMLMITITCLIVFIIAVAA, FLTLGVTLIMYVFVANMLGLP, DATVTLTLAVMVVALTHYYGV, ILLGLLASLGTHYGVLGAVGA, and FPIMVWQAFSIFVGTIQAFIF.

This sequence belongs to the ATPase A chain family. F-type ATPases have 2 components, CF(1) - the catalytic core - and CF(0) - the membrane proton channel. CF(1) has five subunits: alpha(3), beta(3), gamma(1), delta(1), epsilon(1). CF(0) has three main subunits: a(1), b(2) and c(9-12). The alpha and beta chains form an alternating ring which encloses part of the gamma chain. CF(1) is attached to CF(0) by a central stalk formed by the gamma and epsilon chains, while a peripheral stalk is formed by the delta and b chains.

The protein localises to the cell membrane. Functionally, key component of the proton channel; it plays a direct role in the translocation of protons across the membrane. The chain is ATP synthase subunit a from Bacillus sp. (strain PS3).